The following is a 235-amino-acid chain: uncharacterized protein (235 aa).

To B.subtilis YncM.

This is an uncharacterized protein from Bacillus subtilis (strain 168).